Here is a 288-residue protein sequence, read N- to C-terminus: Small ribosomal subunit protein uS3 (288 aa).

The KH type-2 domain maps to 38-106; sequence IRRMMSKGLE…QVQLNIIEVK (69 aa). The segment at 209–288 is disordered; the sequence is PGRETPAEAP…TQPAETQQEG (80 aa). Residues 219 to 232 are compositionally biased toward basic and acidic residues; it reads SRPRRERGDRSERP. Residues 249–264 are compositionally biased toward low complexity; the sequence is AGRAAATTIAQAAETP. The span at 277–288 shows a compositional bias: polar residues; it reads AATQPAETQQEG.

This sequence belongs to the universal ribosomal protein uS3 family. As to quaternary structure, part of the 30S ribosomal subunit. Forms a tight complex with proteins S10 and S14.

In terms of biological role, binds the lower part of the 30S subunit head. Binds mRNA in the 70S ribosome, positioning it for translation. The chain is Small ribosomal subunit protein uS3 from Salinispora tropica (strain ATCC BAA-916 / DSM 44818 / JCM 13857 / NBRC 105044 / CNB-440).